The following is a 75-amino-acid chain: Conotoxin Im23.5 (75 aa).

An N-terminal signal peptide occupies residues 1–23; that stretch reads MKFFTCLLLLLVVLTVVFDNVDA. 3 cysteine pairs are disulfide-bonded: Cys24/Cys28, Cys37/Cys40, and Cys41/Cys43. Residues 24–50 constitute a propeptide that is removed on maturation; that stretch reads CDRSCTGVMGHPSCATCCACFTSAGKR.

Expressed by the venom duct.

It localises to the secreted. In terms of biological role, probable neurotoxin. This Conus imperialis (Imperial cone) protein is Conotoxin Im23.5.